Consider the following 576-residue polypeptide: Putative ankyrin repeat protein L86 (576 aa).

ANK repeat units follow at residues 68–101, 118–147, 159–188, 192–223, 227–260, 264–300, 304–337, 341–373, 377–408, 412–446, and 448–480; these read HGWT…DPNI, TRIN…NVNF, SGGF…NPNI, KGNT…DLNS, KRKT…NPNI, KGNT…NPNI, SGIS…DPNI, QGLT…DPNI, KGKN…NPNA, KGRT…SLTD, and NGKK…TFDV.

This is Putative ankyrin repeat protein L86 from Acanthamoeba polyphaga mimivirus (APMV).